A 324-amino-acid polypeptide reads, in one-letter code: MKILFIVDPLETLKPGHDTSVALMQAAARRGHSVWAAEVGDLQVHHHRAAAQVRTLTIHPGRTPFYTVEAVGFYPLSEADVIWMRKDPPVTSAYLWATQVLDLVNAGRGDGRTTFVLNRPSGLRNDNEKLYALHFPDLVPETRVCTHRQDILDFVDIHGRAVIKPLDGKGGEGIFLLARADRNLNAIIEASTAYGTRHVMVQRYLEESRQGDKRIVLLAGEPIGALLRVPREDDVRGNMAAGGRVVKTTLTERDREICRVVGPRLVADGHYFVGIDVIGAYLTEINVTSPTGICEIDVLDGVVLEDEIVDWLVEYTRPALARNL.

Residues 129 to 313 (KLYALHFPDL…LEDEIVDWLV (185 aa)) form the ATP-grasp domain. Residue 155–211 (VDIHGRAVIKPLDGKGGEGIFLLARADRNLNAIIEASTAYGTRHVMVQRYLEESRQG) participates in ATP binding. Mg(2+)-binding residues include glutamate 284 and asparagine 286.

This sequence belongs to the prokaryotic GSH synthase family. The cofactor is Mg(2+). It depends on Mn(2+) as a cofactor.

The catalysed reaction is gamma-L-glutamyl-L-cysteine + glycine + ATP = glutathione + ADP + phosphate + H(+). The protein operates within sulfur metabolism; glutathione biosynthesis; glutathione from L-cysteine and L-glutamate: step 2/2. This chain is Glutathione synthetase, found in Gloeobacter violaceus (strain ATCC 29082 / PCC 7421).